The chain runs to 352 residues: Phosphoribosylformylglycinamidine cyclo-ligase (352 aa).

Belongs to the AIR synthase family.

The protein localises to the cytoplasm. The catalysed reaction is 2-formamido-N(1)-(5-O-phospho-beta-D-ribosyl)acetamidine + ATP = 5-amino-1-(5-phospho-beta-D-ribosyl)imidazole + ADP + phosphate + H(+). The protein operates within purine metabolism; IMP biosynthesis via de novo pathway; 5-amino-1-(5-phospho-D-ribosyl)imidazole from N(2)-formyl-N(1)-(5-phospho-D-ribosyl)glycinamide: step 2/2. The protein is Phosphoribosylformylglycinamidine cyclo-ligase of Stenotrophomonas maltophilia (strain R551-3).